The sequence spans 534 residues: ATP synthase subunit alpha (534 aa).

170–177 provides a ligand contact to ATP; that stretch reads GDRQTGKT. Positions 505–534 are disordered; it reads HEDARVKSETAQAAGKDKDEKAAATAGAGK.

The protein belongs to the ATPase alpha/beta chains family. As to quaternary structure, F-type ATPases have 2 components, CF(1) - the catalytic core - and CF(0) - the membrane proton channel. CF(1) has five subunits: alpha(3), beta(3), gamma(1), delta(1), epsilon(1). CF(0) has three main subunits: a(1), b(2) and c(9-12). The alpha and beta chains form an alternating ring which encloses part of the gamma chain. CF(1) is attached to CF(0) by a central stalk formed by the gamma and epsilon chains, while a peripheral stalk is formed by the delta and b chains.

The protein resides in the cell inner membrane. The catalysed reaction is ATP + H2O + 4 H(+)(in) = ADP + phosphate + 5 H(+)(out). Produces ATP from ADP in the presence of a proton gradient across the membrane. The alpha chain is a regulatory subunit. In Acidobacterium capsulatum (strain ATCC 51196 / DSM 11244 / BCRC 80197 / JCM 7670 / NBRC 15755 / NCIMB 13165 / 161), this protein is ATP synthase subunit alpha.